The primary structure comprises 311 residues: Dehydrogenase/reductase SDR family member 7C (311 aa).

The signal sequence occupies residues 1-18; that stretch reads MGFLTFLIVPLLILGISG. 41 to 65 contributes to the NAD(+) binding site; it reads VITDAISGLGKECSRVFHSAGARLV. Position 178 (Thr178) interacts with substrate. The active-site Proton acceptor is Tyr191.

The protein belongs to the short-chain dehydrogenases/reductases (SDR) family.

It localises to the secreted. Its function is as follows. Putative oxidoreductase. This is Dehydrogenase/reductase SDR family member 7C (dhrs7c) from Xenopus tropicalis (Western clawed frog).